A 772-amino-acid polypeptide reads, in one-letter code: Probable serine/threonine-protein kinase HAL5-like (772 aa).

4 disordered regions span residues 1 to 102 (MASS…TRHV), 115 to 165 (RAGT…EPNN), 185 to 241 (IDTQ…RSNT), and 344 to 396 (NADE…SANV). Basic and acidic residues predominate over residues 9–19 (SEPRISRESSL). Composition is skewed to low complexity over residues 20–33 (KRSL…KGLF) and 41–59 (NTGP…ISTP). Basic and acidic residues predominate over residues 66-86 (TKDKQDRLKNLAANKEKELQT). Residues 146-158 (RQSSSNRSSSFSN) are compositionally biased toward low complexity. The segment covering 202–212 (RRSRSTQRKRL) has biased composition (basic residues). A Protein kinase domain is found at 454-758 (GKSIGIIGQG…VDSLLKSSWM (305 aa)). Residues 460-468 (IGQGAYGVV) and Lys-498 contribute to the ATP site. Catalysis depends on Asp-609, which acts as the Proton acceptor.

It belongs to the protein kinase superfamily. CAMK Ser/Thr protein kinase family. NPR/HAL subfamily. HAL5 sub-subfamily.

It carries out the reaction L-seryl-[protein] + ATP = O-phospho-L-seryl-[protein] + ADP + H(+). It catalyses the reaction L-threonyl-[protein] + ATP = O-phospho-L-threonyl-[protein] + ADP + H(+). The chain is Probable serine/threonine-protein kinase HAL5-like from Kluyveromyces lactis (strain ATCC 8585 / CBS 2359 / DSM 70799 / NBRC 1267 / NRRL Y-1140 / WM37) (Yeast).